The chain runs to 857 residues: Linoleate 9S-lipoxygenase 6 (857 aa).

The 131-residue stretch at 26–156 (NALDFTDLAG…RYKSDRIFFA (131 aa)) folds into the PLAT domain. Positions 159 to 857 (PYLPSETPEL…GKGIPNSVSI (699 aa)) constitute a Lipoxygenase domain. The disordered stretch occupies residues 205–243 (NPDQGEQNVRTTLGGSADYPYPRRGRTGRPPTRTDPKSE). The span at 208–218 (QGEQNVRTTLG) shows a compositional bias: polar residues. H518, H523, H709, N713, and I857 together coordinate Fe cation.

This sequence belongs to the lipoxygenase family. As to quaternary structure, monomer. It depends on Fe cation as a cofactor. In terms of tissue distribution, expressed in tubers and roots. Detected in leaves, petioles and stems.

It localises to the cytoplasm. It catalyses the reaction (9Z,12Z)-octadecadienoate + O2 = (9S)-hydroperoxy-(10E,12Z)-octadecadienoate. It participates in lipid metabolism; oxylipin biosynthesis. Its function is as follows. Plant lipoxygenases may be involved in a number of diverse aspects of plant physiology including growth and development, pest resistance, and senescence or responses to wounding. Catalyzes the hydroperoxidation of lipids containing a cis,cis-1,4-pentadiene structure. Linoleic and linolenic acids are the preferred substrates, but is also active with arachidonic acid. The products are almost exclusively the S enantiomers. The chain is Linoleate 9S-lipoxygenase 6 (LOX1.6) from Solanum tuberosum (Potato).